Consider the following 87-residue polypeptide: Small ribosomal subunit protein uS15 (87 aa).

Belongs to the universal ribosomal protein uS15 family. In terms of assembly, part of the 30S ribosomal subunit. Forms a bridge to the 50S subunit in the 70S ribosome, contacting the 23S rRNA.

In terms of biological role, one of the primary rRNA binding proteins, it binds directly to 16S rRNA where it helps nucleate assembly of the platform of the 30S subunit by binding and bridging several RNA helices of the 16S rRNA. Forms an intersubunit bridge (bridge B4) with the 23S rRNA of the 50S subunit in the ribosome. This chain is Small ribosomal subunit protein uS15, found in Acetivibrio thermocellus (strain ATCC 27405 / DSM 1237 / JCM 9322 / NBRC 103400 / NCIMB 10682 / NRRL B-4536 / VPI 7372) (Clostridium thermocellum).